We begin with the raw amino-acid sequence, 459 residues long: Cysteine--tRNA ligase (459 aa).

Cys-28 is a binding site for Zn(2+). The 'HIGH' region signature appears at 30 to 40 (ITIYDLCHIGH). Cys-209, His-234, and Glu-238 together coordinate Zn(2+). The 'KMSKS' region signature appears at 266–270 (KMSKS). Lys-269 lines the ATP pocket.

Belongs to the class-I aminoacyl-tRNA synthetase family. In terms of assembly, monomer. The cofactor is Zn(2+).

It is found in the cytoplasm. It catalyses the reaction tRNA(Cys) + L-cysteine + ATP = L-cysteinyl-tRNA(Cys) + AMP + diphosphate. The chain is Cysteine--tRNA ligase from Shewanella woodyi (strain ATCC 51908 / MS32).